The chain runs to 1406 residues: DNA-directed RNA polymerase subunit beta' (1406 aa).

Residues cysteine 70, cysteine 72, cysteine 85, and cysteine 88 each coordinate Zn(2+). Residues aspartate 460, aspartate 462, and aspartate 464 each coordinate Mg(2+). Cysteine 814, cysteine 888, cysteine 895, and cysteine 898 together coordinate Zn(2+).

Belongs to the RNA polymerase beta' chain family. As to quaternary structure, the RNAP catalytic core consists of 2 alpha, 1 beta, 1 beta' and 1 omega subunit. When a sigma factor is associated with the core the holoenzyme is formed, which can initiate transcription. It depends on Mg(2+) as a cofactor. Requires Zn(2+) as cofactor.

It catalyses the reaction RNA(n) + a ribonucleoside 5'-triphosphate = RNA(n+1) + diphosphate. DNA-dependent RNA polymerase catalyzes the transcription of DNA into RNA using the four ribonucleoside triphosphates as substrates. The sequence is that of DNA-directed RNA polymerase subunit beta' from Sodalis glossinidius (strain morsitans).